The sequence spans 526 residues: 2-succinyl-5-enolpyruvyl-6-hydroxy-3-cyclohexene-1-carboxylate synthase (526 aa).

It belongs to the TPP enzyme family. MenD subfamily. In terms of assembly, homodimer. Requires Mg(2+) as cofactor. The cofactor is Mn(2+). It depends on thiamine diphosphate as a cofactor.

The enzyme catalyses isochorismate + 2-oxoglutarate + H(+) = 5-enolpyruvoyl-6-hydroxy-2-succinyl-cyclohex-3-ene-1-carboxylate + CO2. It functions in the pathway quinol/quinone metabolism; 1,4-dihydroxy-2-naphthoate biosynthesis; 1,4-dihydroxy-2-naphthoate from chorismate: step 2/7. Its pathway is quinol/quinone metabolism; menaquinone biosynthesis. Functionally, catalyzes the thiamine diphosphate-dependent decarboxylation of 2-oxoglutarate and the subsequent addition of the resulting succinic semialdehyde-thiamine pyrophosphate anion to isochorismate to yield 2-succinyl-5-enolpyruvyl-6-hydroxy-3-cyclohexene-1-carboxylate (SEPHCHC). This chain is 2-succinyl-5-enolpyruvyl-6-hydroxy-3-cyclohexene-1-carboxylate synthase, found in Bdellovibrio bacteriovorus (strain ATCC 15356 / DSM 50701 / NCIMB 9529 / HD100).